Consider the following 265-residue polypeptide: Mlc titration factor A (265 aa).

Residues histidine 111, histidine 148, histidine 152, and glutamate 211 each contribute to the Zn(2+) site.

It belongs to the MtfA family. Interacts with Mlc. The cofactor is Zn(2+).

It is found in the cytoplasm. In terms of biological role, involved in the modulation of the activity of the glucose-phosphotransferase system (glucose-PTS). Interacts with the transcriptional repressor Mlc, preventing its interaction with DNA and leading to the modulation of expression of genes regulated by Mlc, including ptsG, which encodes the PTS system glucose-specific EIICB component. Functionally, shows zinc-dependent metallopeptidase activity. The polypeptide is Mlc titration factor A (Salmonella gallinarum (strain 287/91 / NCTC 13346)).